The sequence spans 334 residues: MSQSKGKKRNPGLKIPKEAFEQPQTSSTPPRDLDSKACISIGNQNFEVKADDLEPIVELGRGAYGVVEKMRHVPSGQIMAVKRIRATVNSQEQKRLLMDLDVSMRTVDCPFTVTFYGALFREGDVWICMELMDTSLDKFYKQVIDKGQTIPEDILGKIAVSIVKALEHLHSKLSVIHRDVKPSNVLINTLGQVKMCDFGISGYLVDSVAKTIDAGCKPYMAPERINPELNQKGYSVKSDIWSLGITMIELAILRFPYDSWGTPFQQLKQVVEEPSPQLPADKFSADFVDFTSQCLKKNSKERPTYPELMQHPFFTVHESKAADVASFVKLILGD.

Basic residues predominate over residues 1–11 (MSQSKGKKRNP). The disordered stretch occupies residues 1 to 34 (MSQSKGKKRNPGLKIPKEAFEQPQTSSTPPRDLD). The segment at 4-19 (SKGKKRNPGLKIPKEA) is d domain. In terms of domain architecture, Protein kinase spans 53-314 (LEPIVELGRG…YPELMQHPFF (262 aa)). ATP is bound by residues 59–67 (LGRGAYGVV) and Lys82. Asp179 acts as the Proton acceptor in catalysis. A Phosphoserine; by MAPK3 modification is found at Ser207. Thr211 bears the Phosphothreonine; by MAPK3 mark. The tract at residues 311-334 (HPFFTVHESKAADVASFVKLILGD) is DVD domain.

It belongs to the protein kinase superfamily. STE Ser/Thr protein kinase family. MAP kinase kinase subfamily. As to quaternary structure, dimer. Interacts (via its D domain) with its substrates MAPK11, MAPK12, MAPK13 and MAPK14. Interacts (via its DVD domain) with MAP3Ks activators like MAP3K5/ASK1, MAP3K1/MEKK1, MAP3K2/MEKK2, MAP3K3/MEKK3, MAP3K4/MEKK4, MAP3K7/TAK1, MAP3K11/MLK3 and MAP3K17/TAOK2. Interacts with DCTN1. Interacts with EIF2AK2/PKR. In terms of processing, weakly autophosphorylated. Phosphorylated at Ser-207 and Thr-211 by the majority of M3Ks, such as MAP3K5/ASK1, MAP3K1/MEKK1, MAP3K2/MEKK2, MAP3K3/MEKK3, MAP3K4/MEKK4, MAP3K7/TAK1, MAP3K11/MLK3 and MAP3K17/TAOK2. In response to genotoxic stress, MAP3K-phosphorylated MAP2K6 is ubiquitinated and degraded by the SCF(FBXO31) complex.

The protein localises to the nucleus. It localises to the cytoplasm. The protein resides in the cytoskeleton. The catalysed reaction is L-seryl-[protein] + ATP = O-phospho-L-seryl-[protein] + ADP + H(+). The enzyme catalyses L-threonyl-[protein] + ATP = O-phospho-L-threonyl-[protein] + ADP + H(+). It catalyses the reaction L-tyrosyl-[protein] + ATP = O-phospho-L-tyrosyl-[protein] + ADP + H(+). Its activity is regulated as follows. Activated by dual phosphorylation on Ser-207 and Thr-211 in response to a variety of cellular stresses, including UV radiation, osmotic shock, hypoxia, inflammatory cytokines, interferon gamma (IFNG), and less often by growth factors. MAP2K6/MKK6 is activated by the majority of M3Ks, such as MAP3K5/ASK1, MAP3K1/MEKK1, MAP3K2/MEKK2, MAP3K3/MEKK3, MAP3K4/MEKK4, MAP3K7/TAK1, MAP3K11/MLK3 and MAP3K17/TAOK2. Functionally, dual specificity protein kinase which acts as an essential component of the MAP kinase signal transduction pathway. With MAP3K3/MKK3, catalyzes the concomitant phosphorylation of a threonine and a tyrosine residue in the MAP kinases p38 MAPK11, MAPK12, MAPK13 and MAPK14 and plays an important role in the regulation of cellular responses to cytokines and all kinds of stresses. Especially, MAP2K3/MKK3 and MAP2K6/MKK6 are both essential for the activation of MAPK11 and MAPK13 induced by environmental stress, whereas MAP2K6/MKK6 is the major MAPK11 activator in response to TNF. MAP2K6/MKK6 also phosphorylates and activates PAK6. The p38 MAP kinase signal transduction pathway leads to direct activation of transcription factors. Nuclear targets of p38 MAP kinase include the transcription factors ATF2 and ELK1. Within the p38 MAPK signal transduction pathway, MAP3K6/MKK6 mediates phosphorylation of STAT4 through MAPK14 activation, and is therefore required for STAT4 activation and STAT4-regulated gene expression in response to IL-12 stimulation. The pathway is also crucial for IL-6-induced SOCS3 expression and down-regulation of IL-6-mediated gene induction; and for IFNG-dependent gene transcription. Has a role in osteoclast differentiation through NF-kappa-B transactivation by TNFSF11, and in endochondral ossification and since SOX9 is another likely downstream target of the p38 MAPK pathway. MAP2K6/MKK6 mediates apoptotic cell death in thymocytes. Acts also as a regulator for melanocytes dendricity, through the modulation of Rho family GTPases. The protein is Dual specificity mitogen-activated protein kinase kinase 6 (Map2k6) of Mus musculus (Mouse).